The primary structure comprises 355 residues: Putative transport protein PH1000 (355 aa).

The next 8 helical transmembrane spans lie at 34–54, 55–75, 84–104, 158–178, 212–232, 240–260, 274–294, and 310–330; these read VTWIIIITLVALAIKTILPFF, SPLFFAFITAYALYPLHIKLK, AILLTLFLLLGALMILLILVY, FSVPKYLLQVIVYLTFVYFFL, VWLLLNIVKGILMTLGFLIFK, ILAGLLTVLFSFIPLFEGWMI, IIAGIGLAVYGFTLVSPLPDF, and VLVLIGMIGGTWGLGLKGLII.

Belongs to the autoinducer-2 exporter (AI-2E) (TC 2.A.86) family.

The protein resides in the cell membrane. This chain is Putative transport protein PH1000, found in Pyrococcus horikoshii (strain ATCC 700860 / DSM 12428 / JCM 9974 / NBRC 100139 / OT-3).